Consider the following 146-residue polypeptide: Hemoglobin subunit beta (146 aa).

V1 is subject to N-acetylvaline. The region spanning 2–146 (HLSGEEKGAV…VATALAHKYH (145 aa)) is the Globin domain. T12 is modified (phosphothreonine). At S44 the chain carries Phosphoserine. K59 carries the post-translational modification N6-acetyllysine. H63 serves as a coordination point for heme b. The residue at position 82 (K82) is an N6-acetyllysine. H92 contacts heme b. C93 is modified (S-nitrosocysteine). K144 carries the post-translational modification N6-acetyllysine.

Belongs to the globin family. Heterotetramer of two alpha chains and two beta chains. Red blood cells.

Functionally, involved in oxygen transport from the lung to the various peripheral tissues. The protein is Hemoglobin subunit beta (HBB) of Tadarida brasiliensis (Brazilian free-tailed bat).